The sequence spans 621 residues: Chaperone protein HtpG (621 aa).

The segment at 1–328 (MIQEKKKFDA…SEDLPLNISR (328 aa)) is a; substrate-binding. A b region spans residues 329 to 544 (ESLQHNSVLE…DAAMDIRMER (216 aa)). Residues 475 to 494 (SDIDVEQTTSQSEAKNTDSK) form a disordered region. The interval 545-621 (FLIEQKQIAN…LNDIVQKAIL (77 aa)) is c.

Belongs to the heat shock protein 90 family. In terms of assembly, homodimer.

It localises to the cytoplasm. Its function is as follows. Molecular chaperone. Has ATPase activity. This is Chaperone protein HtpG from Rickettsia rickettsii (strain Iowa).